Consider the following 386-residue polypeptide: Protein phosphatase methylesterase 1 (386 aa).

The interval 1–38 (MSALEKSMHLGRLPSRPPLPGSGGSQSGAKMRMGPGRK) is disordered. Serine 15 carries the phosphoserine modification. Arginine 16 carries the post-translational modification Asymmetric dimethylarginine; alternate. Residue arginine 16 is modified to Omega-N-methylarginine; alternate. Active-site residues include serine 156 and aspartate 181. Over residues 255–265 (IEEEEEDEEGS) the composition is skewed to acidic residues. The segment at 255-280 (IEEEEEDEEGSESVNKRKKEDDMETK) is disordered. A compositionally biased stretch (basic and acidic residues) spans 268-280 (VNKRKKEDDMETK). Histidine 349 is an active-site residue.

It belongs to the AB hydrolase superfamily. Binds PPP2CA and PPP2CB. Post-translationally, phosphorylated by SIK1 following increases in intracellular sodium, leading to dissociation from the protein phosphatase 2A (PP2A) complex and subsequent dephosphorylation of sodium/potassium-transporting ATPase ATP1A1. Ubiquitous. Highly expressed in testis and brain.

The enzyme catalyses [phosphatase 2A protein]-C-terminal L-leucine methyl ester + H2O = [phosphatase 2A protein]-C-terminal L-leucine + methanol + H(+). Its function is as follows. Demethylates proteins that have been reversibly carboxymethylated. Demethylates PPP2CB (in vitro) and PPP2CA. Binding to PPP2CA displaces the manganese ion and inactivates the enzyme. This Mus musculus (Mouse) protein is Protein phosphatase methylesterase 1 (Ppme1).